Consider the following 232-residue polypeptide: Small ribosomal subunit protein uS3 (232 aa).

The 69-residue stretch at 39-107 (VRQFLTKELQ…PAQINIAEVR (69 aa)) folds into the KH type-2 domain. Positions 213–232 (AANAVEPKGDKPKKQRKGRK) are disordered.

It belongs to the universal ribosomal protein uS3 family. Part of the 30S ribosomal subunit. Forms a tight complex with proteins S10 and S14.

In terms of biological role, binds the lower part of the 30S subunit head. Binds mRNA in the 70S ribosome, positioning it for translation. In Vibrio campbellii (strain ATCC BAA-1116), this protein is Small ribosomal subunit protein uS3.